We begin with the raw amino-acid sequence, 83 residues long: Small ribosomal subunit protein uS17 (83 aa).

This sequence belongs to the universal ribosomal protein uS17 family. As to quaternary structure, part of the 30S ribosomal subunit.

Its function is as follows. One of the primary rRNA binding proteins, it binds specifically to the 5'-end of 16S ribosomal RNA. The chain is Small ribosomal subunit protein uS17 from Gloeobacter violaceus (strain ATCC 29082 / PCC 7421).